The following is a 1018-amino-acid chain: Integrator complex subunit 5 (1018 aa).

The tract at residues M1 to L26 is disordered. An N-acetylserine modification is found at S2. Residues P8–A17 are compositionally biased toward pro residues. At S278 the chain carries Phosphoserine. Transmembrane regions (helical) follow at residues L533 to F553, L855 to V875, and V929 to L949.

This sequence belongs to the Integrator subunit 5 family. In terms of assembly, component of the Integrator complex, composed of core subunits INTS1, INTS2, INTS3, INTS4, INTS5, INTS6, INTS7, INTS8, INTS9/RC74, INTS10, INTS11/CPSF3L, INTS12, INTS13, INTS14 and INTS15. The core complex associates with protein phosphatase 2A subunits PPP2CA and PPP2R1A, to form the Integrator-PP2A (INTAC) complex.

It is found in the nucleus. The protein localises to the cytoplasm. It localises to the nucleus membrane. In terms of biological role, component of the integrator complex, a multiprotein complex that terminates RNA polymerase II (Pol II) transcription in the promoter-proximal region of genes. The integrator complex provides a quality checkpoint during transcription elongation by driving premature transcription termination of transcripts that are unfavorably configured for transcriptional elongation: the complex terminates transcription by (1) catalyzing dephosphorylation of the C-terminal domain (CTD) of Pol II subunit POLR2A/RPB1 and SUPT5H/SPT5, (2) degrading the exiting nascent RNA transcript via endonuclease activity and (3) promoting the release of Pol II from bound DNA. The integrator complex is also involved in terminating the synthesis of non-coding Pol II transcripts, such as enhancer RNAs (eRNAs), small nuclear RNAs (snRNAs), telomerase RNAs and long non-coding RNAs (lncRNAs). Mediates recruitment of cytoplasmic dynein to the nuclear envelope, probably as component of the integrator complex. In Mus musculus (Mouse), this protein is Integrator complex subunit 5 (Ints5).